We begin with the raw amino-acid sequence, 89 residues long: Small ribosomal subunit protein uS17 (89 aa).

The protein belongs to the universal ribosomal protein uS17 family. As to quaternary structure, part of the 30S ribosomal subunit.

Functionally, one of the primary rRNA binding proteins, it binds specifically to the 5'-end of 16S ribosomal RNA. This Phytoplasma mali (strain AT) protein is Small ribosomal subunit protein uS17.